The primary structure comprises 272 residues: 27-O-demethylrifamycin SV methyltransferase (272 aa).

Residues Ser-89, Gln-94, 117–118 (DA), Leu-134, and His-139 contribute to the S-adenosyl-L-methionine site.

Belongs to the class I-like SAM-binding methyltransferase superfamily. In terms of assembly, exists probably as a trimer.

The enzyme catalyses 27-O-demethylrifamycin SV + S-adenosyl-L-methionine = rifamycin SV + S-adenosyl-L-homocysteine + H(+). Its pathway is antibiotic biosynthesis; rifamycin B biosynthesis. Slightly inhibited by Ca(2+) and Mg(2+). Strongly inhibited by Zn(2+), Ni(2+) and Co(2+). Catalyzes the methylation of 27-O-demethylrifamycin SV (DMRSV) to rifamycin SV. In Amycolatopsis mediterranei (strain S699) (Nocardia mediterranei), this protein is 27-O-demethylrifamycin SV methyltransferase.